We begin with the raw amino-acid sequence, 152 residues long: Ribosome maturation factor RimP (152 aa).

Belongs to the RimP family.

Its subcellular location is the cytoplasm. Its function is as follows. Required for maturation of 30S ribosomal subunits. The protein is Ribosome maturation factor RimP of Idiomarina loihiensis (strain ATCC BAA-735 / DSM 15497 / L2-TR).